We begin with the raw amino-acid sequence, 298 residues long: Putative S-adenosyl-L-methionine-dependent methyltransferase MSMEG_1480/MSMEI_1444 (298 aa).

S-adenosyl-L-methionine contacts are provided by residues Asp127 and 156-157; that span reads DL.

Belongs to the UPF0677 family.

Its function is as follows. Exhibits S-adenosyl-L-methionine-dependent methyltransferase activity. The protein is Putative S-adenosyl-L-methionine-dependent methyltransferase MSMEG_1480/MSMEI_1444 of Mycolicibacterium smegmatis (strain ATCC 700084 / mc(2)155) (Mycobacterium smegmatis).